The chain runs to 97 residues: Small, acid-soluble spore protein gamma-type (97 aa).

The segment covering 1–42 has biased composition (polar residues); it reads MAKQTNKTASGTSTQHVKQQNAQASKNNFGTEFGSETNVQEV. The segment at 1–97 is disordered; sequence MAKQTNKTAS…KNQNSGKYQG (97 aa). Repeats lie at residues 23–56 and 58–91; these read QASK…KSQN and QASK…KNQN. Residues 43 to 63 are compositionally biased toward low complexity; it reads KQQNAQAAANKSQNAQASKNN. Residues 69-78 show a composition bias toward polar residues; that stretch reads ASETSAQEVR. Residues 79-91 are compositionally biased toward low complexity; that stretch reads QQNAQAQAKKNQN.

This sequence belongs to the gamma-type SASP family.

Its function is as follows. SASP are proteins degraded in the first minutes of spore germination and provide amino acids for both new protein synthesis and metabolism. These proteins may be involved in dormant spore's high resistance to UV light. This is Small, acid-soluble spore protein gamma-type (sasP-B) from Priestia megaterium (Bacillus megaterium).